The primary structure comprises 364 residues: tRNA 2-selenouridine synthase (364 aa).

The Rhodanese domain maps to 14–137; the sequence is LLADTPLIDV…LRQTAIQATW (124 aa). The active-site S-selanylcysteine intermediate is C97.

It belongs to the SelU family. In terms of assembly, monomer.

It catalyses the reaction 5-methylaminomethyl-2-thiouridine(34) in tRNA + selenophosphate + (2E)-geranyl diphosphate + H2O + H(+) = 5-methylaminomethyl-2-selenouridine(34) in tRNA + (2E)-thiogeraniol + phosphate + diphosphate. The catalysed reaction is 5-methylaminomethyl-2-thiouridine(34) in tRNA + (2E)-geranyl diphosphate = 5-methylaminomethyl-S-(2E)-geranyl-thiouridine(34) in tRNA + diphosphate. The enzyme catalyses 5-methylaminomethyl-S-(2E)-geranyl-thiouridine(34) in tRNA + selenophosphate + H(+) = 5-methylaminomethyl-2-(Se-phospho)selenouridine(34) in tRNA + (2E)-thiogeraniol. It carries out the reaction 5-methylaminomethyl-2-(Se-phospho)selenouridine(34) in tRNA + H2O = 5-methylaminomethyl-2-selenouridine(34) in tRNA + phosphate. Functionally, involved in the post-transcriptional modification of the uridine at the wobble position (U34) of tRNA(Lys), tRNA(Glu) and tRNA(Gln). Catalyzes the conversion of 2-thiouridine (S2U-RNA) to 2-selenouridine (Se2U-RNA). Acts in a two-step process involving geranylation of 2-thiouridine (S2U) to S-geranyl-2-thiouridine (geS2U) and subsequent selenation of the latter derivative to 2-selenouridine (Se2U) in the tRNA chain. This is tRNA 2-selenouridine synthase from Salmonella dublin (strain CT_02021853).